Consider the following 643-residue polypeptide: MLQIGEDVDYLLIPREVRLAGGVWRVISKPATKEAVFRERLIQFLQEEGRTLEDVARIIEKSTPHPPQPPKKAKVPRVRRVPQMVTPPLRLVVGTYDSSNGSDSELSDFDTSKVKGNRGSGKTRKVRKMPVSYLGSKFLGSDESEDDQELVEAFLRRGEKKPSAPPPRRRVNLPVPMFENNLGPQPSKGDRWREYVSQVSWGKLKQRVRGWAPRSGSEVGQAQQSSIAERAGEMRHSHTSPDLDDSSRNTGDLSDQTLITRRWKPKIKWVSLRRCRKEQVPPLAHGTAEEPPEAAENQGAGAAAEHGVEAAASQRPEAAASPRAEAAANPRAEATANPRAEAAANPRAEAAASPRAEAAANPRAEAAANPRAEATANPRAEAAANPRAEATANPRAEAAVNPRTEAAVNPRTEAAANPRAEAAVNPRAEATASPRAEAEVNQKTEATASPRAETAASPRVEAAASLRVEAAASPRAEATVSPRAEAVATPRAETAASARVEAAANLRAGVLPDQRAEAIDSQRAEGPVNQSTGATENQRVEVLADQRAGVLHDQREEAGPQAILEASADSGSRARKQVKTVRFQTPGRFSWFHMRRKAFWHTPRLPTLPKRGPRAGAGEARSLRVLRADTRADMEHREQEEQL.

The tract at residues 93–124 (VGTYDSSNGSDSELSDFDTSKVKGNRGSGKTR) is disordered. Phosphoserine is present on residues Ser-141 and Ser-144. Disordered regions lie at residues 156 to 191 (RRGE…KGDR), 206 to 492 (QRVR…TPRA), 519 to 540 (IDSQ…NQRV), 553 to 577 (DQRE…ARKQ), and 603 to 643 (PRLP…EEQL). Polar residues predominate over residues 218-227 (EVGQAQQSSI). Residues 230–247 (RAGEMRHSHTSPDLDDSS) show a composition bias toward basic and acidic residues. Residues 248–259 (RNTGDLSDQTLI) are compositionally biased toward polar residues. Basic residues predominate over residues 261–276 (RRWKPKIKWVSLRRCR). Low complexity-rich tracts occupy residues 294 to 399 (AAEN…AEAA), 409 to 432 (NPRT…EATA), and 459 to 473 (RVEA…AAAS). The segment covering 528–537 (VNQSTGATEN) has biased composition (polar residues). The PxLPxI/L motif; mediates interaction with ANKRA2 signature appears at 603–609 (PRLPTLP). Residues 626-643 (LRADTRADMEHREQEEQL) show a composition bias toward basic and acidic residues.

In terms of assembly, component of the 3M complex, composed of core components CUL7, CCDC8 and OBSL1. Interacts (via PxLPxI/L motif) with ANKRA2 (via ankyrin repeats); may link the 3M complex to histone deacetylases including HDAC4 and HDAC5.

Its subcellular location is the cytoplasm. It is found in the cytoskeleton. It localises to the microtubule organizing center. The protein resides in the centrosome. Its function is as follows. Core component of the 3M complex, a complex required to regulate microtubule dynamics and genome integrity. It is unclear how the 3M complex regulates microtubules, it could act by controlling the level of a microtubule stabilizer. Required for localization of CUL7 to the centrosome. This chain is Coiled-coil domain-containing protein 8 (Ccdc8), found in Rattus norvegicus (Rat).